The sequence spans 368 residues: Alanine racemase (368 aa).

The active-site Proton acceptor; specific for D-alanine is the Lys-34. At Lys-34 the chain carries N6-(pyridoxal phosphate)lysine. Arg-132 provides a ligand contact to substrate. The Proton acceptor; specific for L-alanine role is filled by Tyr-261. Residue Met-309 participates in substrate binding.

This sequence belongs to the alanine racemase family. Pyridoxal 5'-phosphate is required as a cofactor.

It carries out the reaction L-alanine = D-alanine. It functions in the pathway amino-acid biosynthesis; D-alanine biosynthesis; D-alanine from L-alanine: step 1/1. Catalyzes the interconversion of L-alanine and D-alanine. May also act on other amino acids. The polypeptide is Alanine racemase (alr) (Carboxydothermus hydrogenoformans (strain ATCC BAA-161 / DSM 6008 / Z-2901)).